The sequence spans 188 residues: MAASMFAGAVRAASGILRPLNILASSAYRNCTKNACLNSILSSRHFSHIQTPVVSSAPRLITSVRNLTCGQTATVLNRMALLLPNVLKPPVRTVTYCSSRKGKRKTVKAVIYRFLRLHSGLWLRRKAGYKKKLWKKTVARKRRLREFVFCNKTQSKLLDKMTTSFWKRRNWYADDPYQMYHDRTNLKV.

It belongs to the bacterial ribosomal protein bL35 family.

It is found in the mitochondrion. In Bos taurus (Bovine), this protein is Large ribosomal subunit protein bL35m (MRPL35).